Consider the following 100-residue polypeptide: Protein Tat (100 aa).

The tract at residues 1 to 20 is disordered; sequence MEPVNPSLEPWKHPGSQPKT. Residues 1–24 are interaction with human CREBBP; the sequence is MEPVNPSLEPWKHPGSQPKTACTN. The segment at 1-48 is transactivation; that stretch reads MEPVNPSLEPWKHPGSQPKTACTNCYCKKCCFHCQACFITKGLGISYG. Residues cysteine 22, cysteine 25, and cysteine 27 each coordinate Zn(2+). The cysteine-rich stretch occupies residues 22–37; the sequence is CTNCYCKKCCFHCQAC. An N6-acetyllysine; by host PCAF modification is found at lysine 28. The Zn(2+) site is built by cysteine 30, histidine 33, cysteine 34, and cysteine 37. The tract at residues 38-48 is core; that stretch reads FITKGLGISYG. The disordered stretch occupies residues 47-100; it reads YGRKKRRQRRRPPQDSQTHQVSLSKPSSQPRGDPTGPKEQKKKVERETETDPVH. The segment covering 48-57 has biased composition (basic residues); the sequence is GRKKRRQRRR. Positions 49-57 match the Nuclear localization signal, RNA-binding (TAR), and protein transduction motif; sequence RKKRRQRRR. The interval 49 to 85 is interaction with the host capping enzyme RNGTT; sequence RKKRRQRRRPPQDSQTHQVSLSKPSSQPRGDPTGPKE. An N6-acetyllysine; by host EP300 and GCN5L2 mark is found at lysine 50 and lysine 51. Arginine 52 and arginine 53 each carry asymmetric dimethylarginine; by host PRMT6. Positions 61–76 are enriched in polar residues; that stretch reads DSQTHQVSLSKPSSQP. Lysine 71 is covalently cross-linked (Glycyl lysine isopeptide (Lys-Gly) (interchain with G-Cter in ubiquitin)). A Cell attachment site motif is present at residues 77-79; that stretch reads RGD. Residues 82 to 100 are compositionally biased toward basic and acidic residues; it reads GPKEQKKKVERETETDPVH.

This sequence belongs to the lentiviruses Tat family. As to quaternary structure, interacts with host CCNT1. Associates with the P-TEFb complex composed at least of Tat, P-TEFb (CDK9 and CCNT1), TAR RNA, RNA Pol II. Recruits the HATs CREBBP, TAF1/TFIID, EP300, PCAF and GCN5L2. Interacts with host KAT5/Tip60; this interaction targets the latter to degradation. Interacts with the host deacetylase SIRT1. Interacts with host capping enzyme RNGTT; this interaction stimulates RNGTT. Binds to host KDR, and to the host integrins ITGAV/ITGB3 and ITGA5/ITGB1. Interacts with host KPNB1/importin beta-1 without previous binding to KPNA1/importin alpha-1. Interacts with EIF2AK2. Interacts with host nucleosome assembly protein NAP1L1; this interaction may be required for the transport of Tat within the nucleus, since the two proteins interact at the nuclear rim. Interacts with host C1QBP/SF2P32; this interaction involves lysine-acetylated Tat. Interacts with the host chemokine receptors CCR2, CCR3 and CXCR4. Interacts with host DPP4/CD26; this interaction may trigger an anti-proliferative effect. Interacts with host LDLR. Interacts with the host extracellular matrix metalloproteinase MMP1. Interacts with host PRMT6; this interaction mediates Tat's methylation. Interacts with, and is ubiquitinated by MDM2/Hdm2. Interacts with host PSMC3 and HTATIP2. Interacts with STAB1; this interaction may overcome SATB1-mediated repression of IL2 and IL2RA (interleukin) in T cells by binding to the same domain than HDAC1. Interacts (when acetylated) with human CDK13, thereby increasing HIV-1 mRNA splicing and promoting the production of the doubly spliced HIV-1 protein Nef. Interacts with host TBP; this interaction modulates the activity of transcriptional pre-initiation complex. Interacts with host RELA. Interacts with host PLSCR1; this interaction negatively regulates Tat transactivation activity by altering its subcellular distribution. Asymmetrical arginine methylation by host PRMT6 seems to diminish the transactivation capacity of Tat and affects the interaction with host CCNT1. In terms of processing, acetylation by EP300, CREBBP, GCN5L2/GCN5 and PCAF regulates the transactivation activity of Tat. EP300-mediated acetylation of Lys-50 promotes dissociation of Tat from the TAR RNA through the competitive binding to PCAF's bromodomain. In addition, the non-acetylated Tat's N-terminus can also interact with PCAF. PCAF-mediated acetylation of Lys-28 enhances Tat's binding to CCNT1. Lys-50 is deacetylated by SIRT1. Post-translationally, polyubiquitination by host MDM2 does not target Tat to degradation, but activates its transactivation function and fosters interaction with CCNT1 and TAR RNA. Phosphorylated by EIF2AK2 on serine and threonine residues adjacent to the basic region important for TAR RNA binding and function. Phosphorylation of Tat by EIF2AK2 is dependent on the prior activation of EIF2AK2 by dsRNA.

It is found in the host nucleus. Its subcellular location is the host nucleolus. The protein localises to the host cytoplasm. It localises to the secreted. Transcriptional activator that increases RNA Pol II processivity, thereby increasing the level of full-length viral transcripts. Recognizes a hairpin structure at the 5'-LTR of the nascent viral mRNAs referred to as the transactivation responsive RNA element (TAR) and recruits the cyclin T1-CDK9 complex (P-TEFb complex) that will in turn hyperphosphorylate the RNA polymerase II to allow efficient elongation. The CDK9 component of P-TEFb and other Tat-activated kinases hyperphosphorylate the C-terminus of RNA Pol II that becomes stabilized and much more processive. Other factors such as HTATSF1/Tat-SF1, SUPT5H/SPT5, and HTATIP2 are also important for Tat's function. Besides its effect on RNA Pol II processivity, Tat induces chromatin remodeling of proviral genes by recruiting the histone acetyltransferases (HATs) CREBBP, EP300 and PCAF to the chromatin. This also contributes to the increase in proviral transcription rate, especially when the provirus integrates in transcriptionally silent region of the host genome. To ensure maximal activation of the LTR, Tat mediates nuclear translocation of NF-kappa-B by interacting with host RELA. Through its interaction with host TBP, Tat may also modulate transcription initiation. Tat can reactivate a latently infected cell by penetrating in it and transactivating its LTR promoter. In the cytoplasm, Tat is thought to act as a translational activator of HIV-1 mRNAs. In terms of biological role, extracellular circulating Tat can be endocytosed by surrounding uninfected cells via the binding to several surface receptors such as CD26, CXCR4, heparan sulfate proteoglycans (HSPG) or LDLR. Neurons are rarely infected, but they internalize Tat via their LDLR. Through its interaction with nuclear HATs, Tat is potentially able to control the acetylation-dependent cellular gene expression. Modulates the expression of many cellular genes involved in cell survival, proliferation or in coding for cytokines or cytokine receptors. Tat plays a role in T-cell and neurons apoptosis. Tat induced neurotoxicity and apoptosis probably contribute to neuroAIDS. Circulating Tat also acts as a chemokine-like and/or growth factor-like molecule that binds to specific receptors on the surface of the cells, affecting many cellular pathways. In the vascular system, Tat binds to ITGAV/ITGB3 and ITGA5/ITGB1 integrins dimers at the surface of endothelial cells and competes with bFGF for heparin-binding sites, leading to an excess of soluble bFGF. This chain is Protein Tat, found in Homo sapiens (Human).